The chain runs to 648 residues: Macrolide export ATP-binding/permease protein MacB (648 aa).

In terms of domain architecture, ABC transporter spans 6-251 (IRVRGVSRAF…GPSAGWRGAI (246 aa)). An ATP-binding site is contributed by 42-49 (GASGSGKS). The next 4 membrane-spanning stretches (helical) occupy residues 273–293 (LLTMLGIIIGIASVAAISALG), 528–548 (VAVISLIVGGIGVMNIMLVSV), 572–592 (FLIEAVMVCLVGGLMGIMLAL), and 613–633 (SIIVAFACSTLIGIVFGFLPA).

This sequence belongs to the ABC transporter superfamily. Macrolide exporter (TC 3.A.1.122) family. In terms of assembly, homodimer.

Its subcellular location is the cell inner membrane. Non-canonical ABC transporter that contains transmembrane domains (TMD), which form a pore in the inner membrane, and an ATP-binding domain (NBD), which is responsible for energy generation. Confers resistance against macrolides. This is Macrolide export ATP-binding/permease protein MacB from Agrobacterium fabrum (strain C58 / ATCC 33970) (Agrobacterium tumefaciens (strain C58)).